The following is a 55-amino-acid chain: Small ribosomal subunit protein bS21 (55 aa).

It belongs to the bacterial ribosomal protein bS21 family.

The sequence is that of Small ribosomal subunit protein bS21 from Ureaplasma parvum serovar 3 (strain ATCC 27815 / 27 / NCTC 11736).